A 284-amino-acid chain; its full sequence is Sulfotransferase 2A1 (284 aa).

The 3'-phosphoadenylyl sulfate site is built by lysine 43, serine 44, glycine 45, threonine 46, asparagine 47, and tryptophan 48. Catalysis depends on histidine 98, which acts as the Proton acceptor. Arginine 120, serine 128, tyrosine 183, serine 217, methionine 222, arginine 246, lysine 247, and glycine 248 together coordinate 3'-phosphoadenylyl sulfate.

This sequence belongs to the sulfotransferase 1 family. Homodimer.

It is found in the cytoplasm. The enzyme catalyses an alcohol + 3'-phosphoadenylyl sulfate = an alkyl sulfate + adenosine 3',5'-bisphosphate + H(+). The catalysed reaction is taurolithocholate + 3'-phosphoadenylyl sulfate = taurolithocholate 3-sulfate + adenosine 3',5'-bisphosphate + H(+). It catalyses the reaction lithocholate + 3'-phosphoadenylyl sulfate = lithocholate sulfate + adenosine 3',5'-bisphosphate + H(+). It carries out the reaction (24S)-hydroxycholesterol + 3'-phosphoadenylyl sulfate = (24S)-hydroxycholesterol 24-sulfate + adenosine 3',5'-bisphosphate + H(+). The enzyme catalyses (24S)-hydroxycholesterol + 3'-phosphoadenylyl sulfate = (24S)-hydroxycholesterol 3-sulfate + adenosine 3',5'-bisphosphate + H(+). The catalysed reaction is (24S)-hydroxycholesterol 24-sulfate + 3'-phosphoadenylyl sulfate = (24S)-hydroxycholesterol 3,24-disulfate + adenosine 3',5'-bisphosphate + H(+). It catalyses the reaction 3beta-hydroxyandrost-5-en-17-one + 3'-phosphoadenylyl sulfate = dehydroepiandrosterone 3-sulfate + adenosine 3',5'-bisphosphate + H(+). It carries out the reaction pregnenolone + 3'-phosphoadenylyl sulfate = pregnenolone sulfate + adenosine 3',5'-bisphosphate + H(+). The enzyme catalyses androsterone + 3'-phosphoadenylyl sulfate = androsterone 3alpha-sulfate + adenosine 3',5'-bisphosphate + H(+). Sulfotransferase that utilizes 3'-phospho-5'-adenylyl sulfate (PAPS) as sulfonate donor to catalyze the sulfonation of steroids and bile acids in the liver and adrenal glands. Mediates the sulfation of a wide range of steroids and sterols, including pregnenolone, androsterone, DHEA, bile acids, cholesterol and as well many xenobiotics that contain alcohol and phenol functional groups. Sulfonation increases the water solubility of most compounds, and therefore their renal excretion, but it can also result in bioactivation to form active metabolites. Plays an important role in maintening steroid and lipid homeostasis. Plays a key role in bile acid metabolism. In addition, catalyzes the metabolic activation of potent carcinogenic polycyclic arylmethanols. The sequence is that of Sulfotransferase 2A1 (Sult2a1) from Rattus norvegicus (Rat).